The primary structure comprises 363 residues: D(1) dopamine receptor (363 aa).

Residues 1–24 are Extracellular-facing; the sequence is MAVLDLNLTTVIDSGFMESDRSVR. Residue asparagine 7 is glycosylated (N-linked (GlcNAc...) asparagine). A helical membrane pass occupies residues 25–45; it reads VLTGCFLSVLILSTLLGNTLV. Residues 46–61 are Cytoplasmic-facing; it reads CAAVTKFRHLRSKVTN. Residues 62–81 form a helical membrane-spanning segment; it reads FFVISLAVSDLLVAVLVMPW. The Extracellular portion of the chain corresponds to 82 to 98; the sequence is KAVTEVAGFWPFGAFCD. Cysteine 97 and cysteine 187 are disulfide-bonded. The helical transmembrane segment at 99–120 threads the bilayer; that stretch reads IWVAFDIMCSTASILNLCVISV. Topologically, residues 121–139 are cytoplasmic; sequence DRYWAISSPFRYERKMTPR. A helical transmembrane segment spans residues 140–164; sequence VAFVMISGAWTLSVLISFIPVQLKW. Residues 165–194 lie on the Extracellular side of the membrane; that stretch reads HKAQPIGFLEVNASRRDLPTDNCDSSLNRT. The helical transmembrane segment at 195–219 threads the bilayer; that stretch reads YAISSSLISFYIPVAIMIVTYTQIY. Residues 220–271 lie on the Cytoplasmic side of the membrane; it reads RIAQKQIRRISALERAAESAQIRHDSMGSGSNMDLESSFKLSFKRETKVLKT. Residues 272 to 297 traverse the membrane as a helical segment; the sequence is LSVIMGVFVCCWLPFFILNCMVPFCK. At 298–310 the chain is on the extracellular side; that stretch reads RTSNGLPCISPTT. The chain crosses the membrane as a helical span at residues 311 to 330; the sequence is FDVFVWFGWANSSLNPIIYA. Topologically, residues 331–363 are cytoplasmic; that stretch reads FNADFRRAFAILLGCQRLCPGSISMETPSLNKN. A lipid anchor (S-palmitoyl cysteine) is attached at cysteine 345.

Belongs to the G-protein coupled receptor 1 family. In terms of tissue distribution, retina.

Its subcellular location is the cell membrane. It localises to the cell projection. The protein resides in the cilium membrane. Functionally, dopamine receptor whose activity is mediated by G proteins which activate adenylyl cyclase. Could be involved in growth hormone release. This Carassius auratus (Goldfish) protein is D(1) dopamine receptor.